A 154-amino-acid chain; its full sequence is Putative protein heh-1 (154 aa).

A signal peptide spans 1–15 (MKTVIFLALLGLAAA). 2 cysteine pairs are disulfide-bonded: Cys-39/Cys-50 and Cys-97/Cys-103.

This sequence belongs to the NPC2 family.

The protein localises to the secreted. The chain is Putative protein heh-1 (heh-1) from Caenorhabditis elegans.